Reading from the N-terminus, the 694-residue chain is Methionine--tRNA ligase (694 aa).

Residues 12 to 22 (PYANGPLHLGH) carry the 'HIGH' region motif. Zn(2+)-binding residues include C143, C146, C156, and C159. The 'KMSKS' region motif lies at 330–334 (KMSKS). K333 is an ATP binding site. The segment at 552–577 (APAAPAATTKPAPSKADAAPAAVANP) is disordered. The tRNA-binding domain maps to 591 to 694 (DFAKLDLRIG…AGAQPGMPVR (104 aa)).

The protein belongs to the class-I aminoacyl-tRNA synthetase family. MetG type 1 subfamily. In terms of assembly, homodimer. It depends on Zn(2+) as a cofactor.

It localises to the cytoplasm. The enzyme catalyses tRNA(Met) + L-methionine + ATP = L-methionyl-tRNA(Met) + AMP + diphosphate. In terms of biological role, is required not only for elongation of protein synthesis but also for the initiation of all mRNA translation through initiator tRNA(fMet) aminoacylation. The sequence is that of Methionine--tRNA ligase from Xanthomonas campestris pv. campestris (strain B100).